The following is a 142-amino-acid chain: Large ribosomal subunit protein bL17 (142 aa).

This sequence belongs to the bacterial ribosomal protein bL17 family. In terms of assembly, part of the 50S ribosomal subunit. Contacts protein L32.

In Chlamydia caviae (strain ATCC VR-813 / DSM 19441 / 03DC25 / GPIC) (Chlamydophila caviae), this protein is Large ribosomal subunit protein bL17.